The chain runs to 67 residues: Andropin (67 aa).

The N-terminal stretch at 1-19 (MKYFLVLVVLTLILAISVG) is a signal peptide.

The protein belongs to the andropin family. As to expression, ejaculatory duct of adult males.

Its subcellular location is the secreted. In terms of biological role, male-specific peptide with moderate activity against Gram-positive bacteria. In Drosophila orena (Fruit fly), this protein is Andropin (Anp).